Reading from the N-terminus, the 139-residue chain is Aspartate 1-decarboxylase (139 aa).

The active-site Schiff-base intermediate with substrate; via pyruvic acid is Ser-25. Ser-25 carries the post-translational modification Pyruvic acid (Ser). Thr-57 is a substrate binding site. Tyr-58 serves as the catalytic Proton donor. 73-75 (GAA) is a substrate binding site. Residues 117 to 139 (TGSDPADAPAGSGLLRGDRPAGR) are disordered.

The protein belongs to the PanD family. In terms of assembly, heterooctamer of four alpha and four beta subunits. Requires pyruvate as cofactor. Is synthesized initially as an inactive proenzyme, which is activated by self-cleavage at a specific serine bond to produce a beta-subunit with a hydroxyl group at its C-terminus and an alpha-subunit with a pyruvoyl group at its N-terminus.

The protein localises to the cytoplasm. The catalysed reaction is L-aspartate + H(+) = beta-alanine + CO2. Its pathway is cofactor biosynthesis; (R)-pantothenate biosynthesis; beta-alanine from L-aspartate: step 1/1. Its function is as follows. Catalyzes the pyruvoyl-dependent decarboxylation of aspartate to produce beta-alanine. The sequence is that of Aspartate 1-decarboxylase from Nocardioides sp. (strain ATCC BAA-499 / JS614).